We begin with the raw amino-acid sequence, 85 residues long: ATP synthase subunit c (85 aa).

A run of 2 helical transmembrane segments spans residues 10 to 30 and 53 to 73; these read IAVA…FAIL and FIVA…ALFF.

This sequence belongs to the ATPase C chain family. As to quaternary structure, F-type ATPases have 2 components, F(1) - the catalytic core - and F(0) - the membrane proton channel. F(1) has five subunits: alpha(3), beta(3), gamma(1), delta(1), epsilon(1). F(0) has three main subunits: a(1), b(2) and c(10-14). The alpha and beta chains form an alternating ring which encloses part of the gamma chain. F(1) is attached to F(0) by a central stalk formed by the gamma and epsilon chains, while a peripheral stalk is formed by the delta and b chains.

It is found in the cell inner membrane. F(1)F(0) ATP synthase produces ATP from ADP in the presence of a proton or sodium gradient. F-type ATPases consist of two structural domains, F(1) containing the extramembraneous catalytic core and F(0) containing the membrane proton channel, linked together by a central stalk and a peripheral stalk. During catalysis, ATP synthesis in the catalytic domain of F(1) is coupled via a rotary mechanism of the central stalk subunits to proton translocation. Its function is as follows. Key component of the F(0) channel; it plays a direct role in translocation across the membrane. A homomeric c-ring of between 10-14 subunits forms the central stalk rotor element with the F(1) delta and epsilon subunits. The protein is ATP synthase subunit c of Shewanella halifaxensis (strain HAW-EB4).